The chain runs to 167 residues: Xanthine-guanine phosphoribosyltransferase (167 aa).

5-phospho-alpha-D-ribose 1-diphosphate is bound by residues 47-48, Gln-79, and 102-110; these read RG and DDLVDSGKT. Gln-79 provides a ligand contact to GMP. Asp-103 contributes to the Mg(2+) binding site. Residues Asp-106 and Ile-149 each coordinate guanine. Xanthine is bound by residues Asp-106 and Ile-149. Residues 106 to 110 and 148 to 149 each bind GMP; these read DSGKT and WI.

The protein belongs to the purine/pyrimidine phosphoribosyltransferase family. XGPT subfamily. As to quaternary structure, homotetramer. Mg(2+) serves as cofactor.

It localises to the cell inner membrane. The enzyme catalyses GMP + diphosphate = guanine + 5-phospho-alpha-D-ribose 1-diphosphate. The catalysed reaction is XMP + diphosphate = xanthine + 5-phospho-alpha-D-ribose 1-diphosphate. It carries out the reaction IMP + diphosphate = hypoxanthine + 5-phospho-alpha-D-ribose 1-diphosphate. It functions in the pathway purine metabolism; GMP biosynthesis via salvage pathway; GMP from guanine: step 1/1. It participates in purine metabolism; XMP biosynthesis via salvage pathway; XMP from xanthine: step 1/1. Functionally, purine salvage pathway enzyme that catalyzes the transfer of the ribosyl-5-phosphate group from 5-phospho-alpha-D-ribose 1-diphosphate (PRPP) to the N9 position of the 6-oxopurines guanine and xanthine to form the corresponding ribonucleotides GMP (guanosine 5'-monophosphate) and XMP (xanthosine 5'-monophosphate), with the release of PPi. To a lesser extent, also acts on hypoxanthine. This chain is Xanthine-guanine phosphoribosyltransferase, found in Cereibacter sphaeroides (strain ATCC 17029 / ATH 2.4.9) (Rhodobacter sphaeroides).